A 212-amino-acid polypeptide reads, in one-letter code: Ribosomal RNA large subunit methyltransferase E (212 aa).

Positions 56, 58, 78, 94, and 117 each coordinate S-adenosyl-L-methionine. K157 acts as the Proton acceptor in catalysis.

This sequence belongs to the class I-like SAM-binding methyltransferase superfamily. RNA methyltransferase RlmE family.

The protein resides in the cytoplasm. It carries out the reaction uridine(2552) in 23S rRNA + S-adenosyl-L-methionine = 2'-O-methyluridine(2552) in 23S rRNA + S-adenosyl-L-homocysteine + H(+). Functionally, specifically methylates the uridine in position 2552 of 23S rRNA at the 2'-O position of the ribose in the fully assembled 50S ribosomal subunit. In Ehrlichia chaffeensis (strain ATCC CRL-10679 / Arkansas), this protein is Ribosomal RNA large subunit methyltransferase E.